Consider the following 530-residue polypeptide: Probable histone-arginine methyltransferase CARMER (530 aa).

Residues 141-450 (ASQYFQFYGY…QSYDVTIDLH (310 aa)) enclose the SAM-dependent MTase PRMT-type domain. Residues Gln154, Arg163, Gly187, Glu209, Glu238, and Thr266 each coordinate S-adenosyl-L-methionine. The residue at position 501 (Arg501) is an Asymmetric dimethylarginine; by autocatalysis.

It belongs to the class I-like SAM-binding methyltransferase superfamily. Protein arginine N-methyltransferase family. Homodimer. Interacts with EcR. Post-translationally, the dimethylated protein is the major form. As to expression, present ubiquitously (at protein level). Expressed in the imaginal disks and in larval brains, and to a much lesser degree in the polytene larval tissue such as salivary glands.

The protein resides in the cytoplasm. It is found in the nucleus. It catalyses the reaction L-arginyl-[protein] + 2 S-adenosyl-L-methionine = N(omega),N(omega)-dimethyl-L-arginyl-[protein] + 2 S-adenosyl-L-homocysteine + 2 H(+). Its function is as follows. Methylates (mono- and asymmetric dimethylation) the guanidino nitrogens of arginyl residues in proteins. May methylate histone H3 at 'Arg-17' and activate transcription via chromatin remodeling. Coordinates ecdysone-mediated expression of cell death genes. The chain is Probable histone-arginine methyltransferase CARMER (Art4) from Drosophila melanogaster (Fruit fly).